We begin with the raw amino-acid sequence, 511 residues long: cAMP-regulated M3L protein (511 aa).

To D.discoideum protein M3R.

In Dictyostelium discoideum (Social amoeba), this protein is cAMP-regulated M3L protein (prtA).